We begin with the raw amino-acid sequence, 190 residues long: RNA pyrophosphohydrolase (190 aa).

The 144-residue stretch at 6 to 149 (GYRPNVGIVL…KRGVYARALC (144 aa)) folds into the Nudix hydrolase domain. Positions 38-59 (GGMHSDETPVEAMYRELNEETG) match the Nudix box motif.

Belongs to the Nudix hydrolase family. RppH subfamily. A divalent metal cation is required as a cofactor.

Its function is as follows. Accelerates the degradation of transcripts by removing pyrophosphate from the 5'-end of triphosphorylated RNA, leading to a more labile monophosphorylated state that can stimulate subsequent ribonuclease cleavage. The protein is RNA pyrophosphohydrolase of Xylella fastidiosa (strain 9a5c).